Here is a 286-residue protein sequence, read N- to C-terminus: Putative transcription factor kapC (286 aa).

Residues 1 to 10 (MQPALAPAPH) are compositionally biased toward pro residues. The disordered stretch occupies residues 1-120 (MQPALAPAPH…QNRAAQRAFR (120 aa)). Positions 26 to 40 (HDQLLAAHQHLSHPQ) are enriched in low complexity. Residues 41–54 (QPRPQAPATQPPHM) show a composition bias toward pro residues. Over residues 55 to 67 (QPNTASPRDQNNI) the composition is skewed to polar residues. A compositionally biased stretch (pro residues) spans 81–92 (PQTPPQPEPAPQ). One can recognise a bZIP domain in the interval 102-165 (PLSTSKRAAQ…EYIINLQTRL (64 aa)). Positions 103–126 (LSTSKRAAQNRAAQRAFRQRKESY) are basic motif. Low complexity predominate over residues 108–118 (RAAQNRAAQRA). The interval 130 to 161 (LEEQVKHQEAITEEYKALHAENYQLREYIINL) is leucine-zipper. Positions 197–286 (RGNAASAGPA…QEPDGLPVVS (90 aa)) are disordered. Low complexity predominate over residues 198-222 (GNAASAGPAPAGPGPQQSQPNQNQG).

It belongs to the bZIP family.

It localises to the nucleus. In terms of biological role, putative transcription factor. This Aspergillus terreus (strain NIH 2624 / FGSC A1156) protein is Putative transcription factor kapC (kapC).